Consider the following 66-residue polypeptide: Moricin-1 (66 aa).

A signal peptide spans 1–24 (MNILKFFFVFIVAMSLVSCSTAAP).

Expressed in fat body and to a lesser extent in hemocyte and Malpighian tubules.

The protein localises to the secreted. Has antibacterial activity against Gram-positive and Gram-negative bacteria. Probably acts by disturbing membrane functions with its amphipathic structure. The polypeptide is Moricin-1 (MOR1) (Bombyx mori (Silk moth)).